A 635-amino-acid polypeptide reads, in one-letter code: MAGUK p55 subfamily member 4 (635 aa).

A compositionally biased stretch (basic and acidic residues) spans 1–16; sequence MRQSDRGAELTNEDRA. A disordered region spans residues 1 to 23; sequence MRQSDRGAELTNEDRALPTPPDP. 2 consecutive L27 domains span residues 23–79 and 86–136; these read PENG…EKKL and AQIL…FEPL. A PDZ domain is found at 153-234; that stretch reads IVCLVKNQQP…TIMFKVIPVS (82 aa). The SH3 domain occupies 241–311; the sequence is QKMVYVRAMI…PSNHLLKRKQ (71 aa). One can recognise a Guanylate kinase-like domain in the interval 426–615; it reads HRLIVLVGPS…ACGQLLSAIQ (190 aa). Residues 567 to 622 are a coiled coil; that stretch reads VDMKFKDEDLQEMEELAQKMESQFGQFFDHVIVNDNLQDACGQLLSAIQKAQEELQ.

Belongs to the MAGUK family. In terms of assembly, may interact with GRIA2. Interacts with MPDZ. Forms a complex with CRB1 and PALS1. Interacts with FASLG. Detected in the retina (at protein level). Highly enriched in the retina where it is mainly expressed by rod photoreceptors; detected in the inner segment of the photoreceptor layer and in the outer nuclear layer. Also detected at much lower levels in pineal gland, cerebellum, cortex, hippocampus, olfactory bulb, heart, liver and spleen. Expressed in the CA1-CA3 regions of pyramidal cell layers and in the granule cell layer of dentate gyrus in the hippocampus. In the cerebellum, expressed in Purkinje cells and throughout the granule cell layer. In the olfactory bulb, expressed in mitral cells.

It is found in the cytoplasm. May play a role in retinal photoreceptors development. This chain is MAGUK p55 subfamily member 4 (Mpp4), found in Mus musculus (Mouse).